The sequence spans 473 residues: C3a anaphylatoxin chemotactic receptor (473 aa).

At 1 to 23 (MESFTADTNSTDLHSRPLFKPQD) the chain is on the extracellular side. A glycan (N-linked (GlcNAc...) asparagine) is linked at Asn-9. The chain crosses the membrane as a helical span at residues 24–46 (IASMVILSLTCLLGLPGNGLVLW). Topologically, residues 47 to 57 (VAGVKMKRTVN) are cytoplasmic. Residues 58–80 (TVWFLHLTLADFLCCLSLPFSVA) form a helical membrane-spanning segment. Residues 81-96 (HLILRGHWPYGLFLCK) are Extracellular-facing. A disulfide bond links Cys-95 and Cys-172. Residues 97-118 (LIPSVIILNMFASVFLLTAISL) traverse the membrane as a helical segment. The Cytoplasmic segment spans residues 119–139 (DRCLMVHKPIWCQNHRSVRTA). A helical transmembrane segment spans residues 140-160 (FAVCGCVWVVTFVMCIPVFVY). The Extracellular segment spans residues 161-329 (RDLLVVDDYS…TPQVAITISR (169 aa)). Sulfotyrosine occurs at positions 174 and 184. N-linked (GlcNAc...) asparagine glycosylation is present at Asn-201. The interval 233 to 252 (FHTSPEDPFSQDSASQQPHY) is disordered. A Sulfotyrosine modification is found at Tyr-308. The helical transmembrane segment at 330–349 (LVVGFLVPFFIMITCYSLIV) threads the bilayer. The Cytoplasmic segment spans residues 350–366 (FRMRKTNLTKSRNKTLR). Residues 367–389 (VAVAVVTVFFVCWIPYHIVGILL) traverse the membrane as a helical segment. The Extracellular portion of the chain corresponds to 390–406 (VITDQESALREVVLPWD). The helical transmembrane segment at 407–427 (HMSIALASANSCFNPFLYALL) threads the bilayer. Topologically, residues 428 to 473 (GKDFRKKARQSVKGILEAAFSEELTHSTSCTQDKAPSKRNHMSTDV) are cytoplasmic. Ser-448 is modified (phosphoserine). Thr-452 is subject to Phosphothreonine.

This sequence belongs to the G-protein coupled receptor 1 family. Interacts with VGF-derived peptide TLQP-21.

The protein localises to the cell membrane. Receptor for the chemotactic and inflammatory peptide anaphylatoxin C3a. This receptor stimulates chemotaxis, granule enzyme release and superoxide anion production. The sequence is that of C3a anaphylatoxin chemotactic receptor (C3ar1) from Rattus norvegicus (Rat).